The sequence spans 439 residues: Adenylosuccinate synthetase (439 aa).

Residues 25–31 and 53–55 contribute to the GTP site; these read GDEGKGK and GHT. Residue aspartate 26 is the Proton acceptor of the active site. Mg(2+) is bound by residues aspartate 26 and glycine 53. IMP is bound by residues 26–29, 51–54, threonine 146, arginine 160, asparagine 237, threonine 252, and arginine 316; these read DEGK and NAGH. The Proton donor role is filled by histidine 54. Residue 312 to 318 participates in substrate binding; sequence VTTGRRR. Residues arginine 318, 344 to 346, and 426 to 428 each bind GTP; these read KLD and GVG.

This sequence belongs to the adenylosuccinate synthetase family. Homodimer. Mg(2+) serves as cofactor.

It localises to the cytoplasm. It catalyses the reaction IMP + L-aspartate + GTP = N(6)-(1,2-dicarboxyethyl)-AMP + GDP + phosphate + 2 H(+). The protein operates within purine metabolism; AMP biosynthesis via de novo pathway; AMP from IMP: step 1/2. Plays an important role in the de novo pathway and in the salvage pathway of purine nucleotide biosynthesis. Catalyzes the first committed step in the biosynthesis of AMP from IMP. In Mycosarcoma maydis (Corn smut fungus), this protein is Adenylosuccinate synthetase.